We begin with the raw amino-acid sequence, 1342 residues long: DNA-directed RNA polymerase subunit beta (1342 aa).

It belongs to the RNA polymerase beta chain family. As to quaternary structure, the RNAP catalytic core consists of 2 alpha, 1 beta, 1 beta' and 1 omega subunit. When a sigma factor is associated with the core the holoenzyme is formed, which can initiate transcription.

The enzyme catalyses RNA(n) + a ribonucleoside 5'-triphosphate = RNA(n+1) + diphosphate. DNA-dependent RNA polymerase catalyzes the transcription of DNA into RNA using the four ribonucleoside triphosphates as substrates. This is DNA-directed RNA polymerase subunit beta from Erwinia tasmaniensis (strain DSM 17950 / CFBP 7177 / CIP 109463 / NCPPB 4357 / Et1/99).